The primary structure comprises 300 residues: Tyrosine recombinase XerC (300 aa).

Residues 2–88 (ENVNFTLNLF…SLRSFYKFLL (87 aa)) form the Core-binding (CB) domain. Residues 109 to 294 (KIPHFLYPDE…TKDHLRYVYL (186 aa)) enclose the Tyr recombinase domain. Catalysis depends on residues R149, K173, H246, R249, and H272. The active-site O-(3'-phospho-DNA)-tyrosine intermediate is Y281.

It belongs to the 'phage' integrase family. XerC subfamily. In terms of assembly, forms a cyclic heterotetrameric complex composed of two molecules of XerC and two molecules of XerD.

It is found in the cytoplasm. Its function is as follows. Site-specific tyrosine recombinase, which acts by catalyzing the cutting and rejoining of the recombining DNA molecules. The XerC-XerD complex is essential to convert dimers of the bacterial chromosome into monomers to permit their segregation at cell division. It also contributes to the segregational stability of plasmids. The chain is Tyrosine recombinase XerC from Anoxybacillus flavithermus (strain DSM 21510 / WK1).